The chain runs to 476 residues: Glutamate--tRNA ligase (476 aa).

The 'HIGH' region motif lies at 9–19 (PSPTGTLHIGT). The short motif at 248 to 252 (KLSKR) is the 'KMSKS' region element. Residue Lys251 coordinates ATP.

Belongs to the class-I aminoacyl-tRNA synthetase family. Glutamate--tRNA ligase type 1 subfamily. In terms of assembly, monomer.

Its subcellular location is the cytoplasm. The enzyme catalyses tRNA(Glu) + L-glutamate + ATP = L-glutamyl-tRNA(Glu) + AMP + diphosphate. In terms of biological role, catalyzes the attachment of glutamate to tRNA(Glu) in a two-step reaction: glutamate is first activated by ATP to form Glu-AMP and then transferred to the acceptor end of tRNA(Glu). The chain is Glutamate--tRNA ligase from Synechococcus sp. (strain CC9311).